Consider the following 349-residue polypeptide: Aminomethyltransferase (349 aa).

Belongs to the GcvT family. In terms of assembly, the glycine cleavage system is composed of four proteins: P, T, L and H.

The catalysed reaction is N(6)-[(R)-S(8)-aminomethyldihydrolipoyl]-L-lysyl-[protein] + (6S)-5,6,7,8-tetrahydrofolate = N(6)-[(R)-dihydrolipoyl]-L-lysyl-[protein] + (6R)-5,10-methylene-5,6,7,8-tetrahydrofolate + NH4(+). In terms of biological role, the glycine cleavage system catalyzes the degradation of glycine. This Thermus thermophilus (strain ATCC 27634 / DSM 579 / HB8) protein is Aminomethyltransferase.